The chain runs to 553 residues: Putative transport protein YidE (553 aa).

5 helical membrane passes run 4 to 24 (IALT…IGNI), 28 to 48 (GVGF…HFVD), 65 to 85 (FGLI…FFAS), 95 to 115 (LFAV…HKIF), and 158 to 178 (MSYA…MWLM). RCK C-terminal domains lie at 192-276 (KHES…VIGK) and 279-361 (DTSL…VVGN). Transmembrane regions (helical) follow at residues 371–391 (MLPV…PLFV), 393–413 (GFPV…ALIL), 437–457 (LGIV…FVDT), 464–484 (LSWI…VGLL), 493–513 (YLTL…LAFA), and 533–553 (LVMF…WGMG).

This sequence belongs to the AAE transporter (TC 2.A.81) family. YidE subfamily.

The protein resides in the cell membrane. This is Putative transport protein YidE from Salmonella newport (strain SL254).